We begin with the raw amino-acid sequence, 341 residues long: Putative amino-acid ABC transporter-binding protein YhdW (341 aa).

The first 19 residues, 1–19, serve as a signal peptide directing secretion; the sequence is MKKMMIATLAAASVLLAVA.

It belongs to the bacterial solute-binding protein 3 family.

It localises to the periplasm. Its function is as follows. Probably part of the binding-protein-dependent transport system YdhWXYZ for an amino acid. This chain is Putative amino-acid ABC transporter-binding protein YhdW (yhdW), found in Escherichia coli O157:H7.